Here is a 153-residue protein sequence, read N- to C-terminus: Endoribonuclease YbeY (153 aa).

Zn(2+)-binding residues include H116, H120, and H126.

Belongs to the endoribonuclease YbeY family. Requires Zn(2+) as cofactor.

Its subcellular location is the cytoplasm. In terms of biological role, single strand-specific metallo-endoribonuclease involved in late-stage 70S ribosome quality control and in maturation of the 3' terminus of the 16S rRNA. The protein is Endoribonuclease YbeY of Leifsonia xyli subsp. xyli (strain CTCB07).